The primary structure comprises 452 residues: uncharacterized protein (452 aa).

7 helical membrane-spanning segments follow: residues 18 to 38 (PIIE…VLAK), 81 to 101 (LLPV…FLLA), 269 to 289 (IVLL…ALFI), 317 to 337 (AGQV…ATDI), 354 to 374 (VIIV…LPAF), 390 to 410 (VFVV…LTQI), and 428 to 448 (SYAV…LLVV).

It belongs to the auxin efflux carrier (TC 2.A.69) family.

It localises to the membrane. This is an uncharacterized protein from Schizosaccharomyces pombe (strain 972 / ATCC 24843) (Fission yeast).